We begin with the raw amino-acid sequence, 149 residues long: UPF0260 protein Pmen_1776 (149 aa).

It belongs to the UPF0260 family.

The sequence is that of UPF0260 protein Pmen_1776 from Ectopseudomonas mendocina (strain ymp) (Pseudomonas mendocina).